Consider the following 376-residue polypeptide: Carbamoyl phosphate synthase small chain (376 aa).

A CPSase region spans residues 1–187 (MKALLVLEDG…AEDGSYAWRG (187 aa)). L-glutamine is bound by residues Ser-45, Gly-239, and Gly-241. In terms of domain architecture, Glutamine amidotransferase type-1 spans 191–376 (PLLVYDFGIK…RKIIGESAGA (186 aa)). Cys-266 functions as the Nucleophile in the catalytic mechanism. Positions 267, 270, 308, 310, and 311 each coordinate L-glutamine. Residues His-349 and Glu-351 contribute to the active site.

The protein belongs to the CarA family. Composed of two chains; the small (or glutamine) chain promotes the hydrolysis of glutamine to ammonia, which is used by the large (or ammonia) chain to synthesize carbamoyl phosphate. Tetramer of heterodimers (alpha,beta)4.

It catalyses the reaction hydrogencarbonate + L-glutamine + 2 ATP + H2O = carbamoyl phosphate + L-glutamate + 2 ADP + phosphate + 2 H(+). The catalysed reaction is L-glutamine + H2O = L-glutamate + NH4(+). The protein operates within amino-acid biosynthesis; L-arginine biosynthesis; carbamoyl phosphate from bicarbonate: step 1/1. It functions in the pathway pyrimidine metabolism; UMP biosynthesis via de novo pathway; (S)-dihydroorotate from bicarbonate: step 1/3. Its function is as follows. Small subunit of the glutamine-dependent carbamoyl phosphate synthetase (CPSase). CPSase catalyzes the formation of carbamoyl phosphate from the ammonia moiety of glutamine, carbonate, and phosphate donated by ATP, constituting the first step of 2 biosynthetic pathways, one leading to arginine and/or urea and the other to pyrimidine nucleotides. The small subunit (glutamine amidotransferase) binds and cleaves glutamine to supply the large subunit with the substrate ammonia. This is Carbamoyl phosphate synthase small chain from Desulfovibrio desulfuricans (strain ATCC 27774 / DSM 6949 / MB).